Reading from the N-terminus, the 640-residue chain is 1-deoxy-D-xylulose-5-phosphate synthase (640 aa).

Residues histidine 75 and 117–119 (GHA) each bind thiamine diphosphate. Mg(2+) is bound at residue aspartate 146. Thiamine diphosphate contacts are provided by residues 147–148 (AA), asparagine 175, and glutamate 370. Residue asparagine 175 participates in Mg(2+) binding.

The protein belongs to the transketolase family. DXPS subfamily. In terms of assembly, homodimer. It depends on Mg(2+) as a cofactor. The cofactor is thiamine diphosphate.

It carries out the reaction D-glyceraldehyde 3-phosphate + pyruvate + H(+) = 1-deoxy-D-xylulose 5-phosphate + CO2. It participates in metabolic intermediate biosynthesis; 1-deoxy-D-xylulose 5-phosphate biosynthesis; 1-deoxy-D-xylulose 5-phosphate from D-glyceraldehyde 3-phosphate and pyruvate: step 1/1. Its function is as follows. Catalyzes the acyloin condensation reaction between C atoms 2 and 3 of pyruvate and glyceraldehyde 3-phosphate to yield 1-deoxy-D-xylulose-5-phosphate (DXP). This chain is 1-deoxy-D-xylulose-5-phosphate synthase, found in Chlamydia trachomatis serovar A (strain ATCC VR-571B / DSM 19440 / HAR-13).